We begin with the raw amino-acid sequence, 102 residues long: Protein PAPPAS (102 aa).

Helical transmembrane passes span leucine 13–tryptophan 33 and isoleucine 82–phenylalanine 102.

Expressed in placenta with lower expression in brain, kidney and testis.

The protein localises to the endoplasmic reticulum membrane. This Homo sapiens (Human) protein is Protein PAPPAS (PAPPA-AS1).